The sequence spans 427 residues: Transcobalamin-2 (427 aa).

The first 18 residues, 1–18, serve as a signal peptide directing secretion; that stretch reads MELLKALLLLSGVLGALA. Intrachain disulfides connect Cys-21–Cys-268, Cys-116–Cys-310, and Cys-165–Cys-208. Cob(II)alamin-binding positions include 152–156, His-193, 193–197, Asn-245, Ser-248, Gln-292, and 395–397; these read TSYYQ, HLSVD, and WQL.

Belongs to the eukaryotic cobalamin transport proteins family. In terms of assembly, interacts with CD320 (via LDL-receptor class A domains).

Its subcellular location is the secreted. Primary vitamin B12-binding and transport protein. Delivers cobalamin to cells. The chain is Transcobalamin-2 (Tcn2) from Rattus norvegicus (Rat).